Reading from the N-terminus, the 128-residue chain is Large ribosomal subunit protein bL19 (128 aa).

It belongs to the bacterial ribosomal protein bL19 family.

Its function is as follows. This protein is located at the 30S-50S ribosomal subunit interface and may play a role in the structure and function of the aminoacyl-tRNA binding site. The protein is Large ribosomal subunit protein bL19 of Caldicellulosiruptor bescii (strain ATCC BAA-1888 / DSM 6725 / KCTC 15123 / Z-1320) (Anaerocellum thermophilum).